Here is an 896-residue protein sequence, read N- to C-terminus: Translation initiation factor IF-2 (896 aa).

2 stretches are compositionally biased toward basic and acidic residues: residues 94–159 (KRDP…KDKV) and 166–219 (DMTK…EKNW). The disordered stretch occupies residues 94–307 (KRDPQEAERL…GSALQQGFQK (214 aa)). Positions 256–271 (GRGRNAKAARPAKKGN) are enriched in basic residues. The segment covering 272 to 285 (KHAESKADREEARA) has biased composition (basic and acidic residues). The 170-residue stretch at 395 to 564 (PRAPVVTIMG…LLQAEVLELK (170 aa)) folds into the tr-type G domain. A G1 region spans residues 404-411 (GHVDHGKT). Residue 404–411 (GHVDHGKT) participates in GTP binding. The interval 429 to 433 (GITQH) is G2. The segment at 450-453 (DTPG) is G3. GTP-binding positions include 450 to 454 (DTPGH) and 504 to 507 (NKID). The interval 504–507 (NKID) is G4. The segment at 540 to 542 (SAK) is G5.

It belongs to the TRAFAC class translation factor GTPase superfamily. Classic translation factor GTPase family. IF-2 subfamily.

The protein localises to the cytoplasm. Functionally, one of the essential components for the initiation of protein synthesis. Protects formylmethionyl-tRNA from spontaneous hydrolysis and promotes its binding to the 30S ribosomal subunits. Also involved in the hydrolysis of GTP during the formation of the 70S ribosomal complex. The sequence is that of Translation initiation factor IF-2 (infB) from Klebsiella oxytoca.